The following is a 548-amino-acid chain: Undecaprenyl phosphate-alpha-4-amino-4-deoxy-L-arabinose arabinosyl transferase 1 (548 aa).

Helical transmembrane passes span 11–31 (WLLF…TRLL), 89–109 (IVVV…AMVV), 114–134 (ALAF…AIGT), 137–157 (ILDP…LVAL), 180–200 (FLTK…VMAI), 214–234 (IALL…ALQA), 263–283 (FYIP…FGAL), 292–312 (GTLY…ASKG), 314–334 (LLTY…HYIE), 347–367 (VNAS…IYSL), 382–402 (KIVL…GALF), and 405–425 (TQFL…YAIP).

It belongs to the glycosyltransferase 83 family.

The protein localises to the cell inner membrane. It carries out the reaction 4-amino-4-deoxy-alpha-L-arabinopyranosyl di-trans,octa-cis-undecaprenyl phosphate + lipid IVA = lipid IIA + di-trans,octa-cis-undecaprenyl phosphate.. It functions in the pathway lipopolysaccharide metabolism; 4-amino-4-deoxy-beta-L-arabinose-lipid A biosynthesis. Catalyzes the transfer of the L-Ara4N moiety of the glycolipid undecaprenyl phosphate-alpha-L-Ara4N to lipid A. The modified arabinose is attached to lipid A and is required for resistance to polymyxin and cationic antimicrobial peptides. The protein is Undecaprenyl phosphate-alpha-4-amino-4-deoxy-L-arabinose arabinosyl transferase 1 of Proteus mirabilis (strain HI4320).